The primary structure comprises 151 residues: 3-dehydroquinate dehydratase (151 aa).

Residue Tyr-26 is the Proton acceptor of the active site. The substrate site is built by Asn-75, His-81, and Asp-88. His-101 acts as the Proton donor in catalysis. Residues 102–103 (LS) and Arg-112 contribute to the substrate site.

It belongs to the type-II 3-dehydroquinase family. Homododecamer.

The catalysed reaction is 3-dehydroquinate = 3-dehydroshikimate + H2O. The protein operates within metabolic intermediate biosynthesis; chorismate biosynthesis; chorismate from D-erythrose 4-phosphate and phosphoenolpyruvate: step 3/7. Functionally, catalyzes a trans-dehydration via an enolate intermediate. This chain is 3-dehydroquinate dehydratase, found in Shewanella halifaxensis (strain HAW-EB4).